Consider the following 438-residue polypeptide: Gamma-glutamyl phosphate reductase (438 aa).

The protein belongs to the gamma-glutamyl phosphate reductase family.

It localises to the cytoplasm. The enzyme catalyses L-glutamate 5-semialdehyde + phosphate + NADP(+) = L-glutamyl 5-phosphate + NADPH + H(+). It functions in the pathway amino-acid biosynthesis; L-proline biosynthesis; L-glutamate 5-semialdehyde from L-glutamate: step 2/2. Functionally, catalyzes the NADPH-dependent reduction of L-glutamate 5-phosphate into L-glutamate 5-semialdehyde and phosphate. The product spontaneously undergoes cyclization to form 1-pyrroline-5-carboxylate. In Prochlorococcus marinus (strain MIT 9313), this protein is Gamma-glutamyl phosphate reductase.